We begin with the raw amino-acid sequence, 341 residues long: Methionine import ATP-binding protein MetN (341 aa).

The 239-residue stretch at 9-247 (ISVQDVSKKL…SENSITNELF (239 aa)) folds into the ABC transporter domain. 41–48 (GHSGSGKT) contributes to the ATP binding site.

The protein belongs to the ABC transporter superfamily. Methionine importer (TC 3.A.1.24) family. In terms of assembly, the complex is composed of two ATP-binding proteins (MetN), two transmembrane proteins (MetI) and a solute-binding protein (MetQ).

The protein resides in the cell inner membrane. The catalysed reaction is L-methionine(out) + ATP + H2O = L-methionine(in) + ADP + phosphate + H(+). It catalyses the reaction D-methionine(out) + ATP + H2O = D-methionine(in) + ADP + phosphate + H(+). In terms of biological role, part of the ABC transporter complex MetNIQ involved in methionine import. Responsible for energy coupling to the transport system. This chain is Methionine import ATP-binding protein MetN, found in Chlamydia pneumoniae (Chlamydophila pneumoniae).